We begin with the raw amino-acid sequence, 779 residues long: MEKMTRVSTINGRTMFCHLDAPANAISVCRDATQVVVAGRNIFKIYGLEEDGFVERLNLRVGRKPSLNFSCADVMWHQMEENLLATAATNGAVVTWNLSRPCRNKQEQLFTEHKRTVNKVCFHPTEVNMLLSGSQDGFMKCFDLRKKESVSTFSGQSESVRDVQFSMKDYFTFAASFENGNVQLWDIRRPDRYERMFTAHTGPVFCCDWHPEDRGWLATGGRDKMVKVWDMSTNRVKEIYCVQTFASVARVKWRPERRYHLATCSMMVDHNIYVWDVRRPFIPFATFEEHKDVTTGIVWRHQHDPYFLLSGSKDSTLYQHMFKDASRPVDRANPEGLCFGLFGDLAFAAKESLMSAPASAGDVGRKTYPGGDRRYPIFFFKKPDVTEQFAQVSSALSVFESEADSSAGMDWFINTAQSYLLSGKPFAELCEHNAHVAKSLNRPQESTTWTMLRIMFSEPANPSLSTNHNLNKSGNLPLVNSFSMKEMSGALNERNKENRQDNIHSLETNLNNNDENEETEGSEGQAEYLFVDDELDDDELYSMEHDNQPAEESEYLLPQEAFPLRHEIMDHPSAPEPLQEKQESPHVSGSEAESMCLTPMESFSLISVSQQLFSPHLPPKFFCPIVKEMLCYYAEQGDVQMAVSVLIVLGDRIRKEIDELMQEHWYMSYIDLLQRFELWNVSNEVIKLSTCGAIMCLNQASTTLHINCSNCKRPMSNKGWICDRCHQCASVCAVCHHVVKGLFVWCQGCSHGGHLEHVMEWLKQSKHCPAGCGHLCEYT.

WD repeat units lie at residues 66-106, 112-152, 155-195, 199-239, 243-285, and 289-332; these read SLNF…RNKQ, EHKR…SVST, GQSE…RYER, AHTG…VKEI, QTFA…IPFA, and EHKD…VDRA. Disordered stretches follow at residues 506-526 and 570-590; these read LETN…EGQA and DHPS…VSGS. The C4-type zinc-finger motif lies at 707–729; it reads NCSNCKRPMSNKGWICDRCHQCA. The Zn(2+) site is built by C708, C711, C722, C725, C732, C735, C746, C749, H751, H754, H757, C768, C772, H774, and C776. The RING-type; atypical zinc-finger motif lies at 730 to 779; the sequence is SVCAVCHHVVKGLFVWCQGCSHGGHLEHVMEWLKQSKHCPAGCGHLCEYT.

The protein belongs to the WD repeat WDR24 family. In terms of assembly, component of the GATOR2 subcomplex, composed of MIOS, SEC13, SEH1L, WDR24 and WDR59. The GATOR2 complex interacts with CASTOR1 and CASTOR2; the interaction is negatively regulated by arginine. The GATOR2 complex interacts with SESN1, SESN2 and SESN3; the interaction is negatively regulated by amino acids.

The protein resides in the lysosome membrane. It catalyses the reaction S-ubiquitinyl-[E2 ubiquitin-conjugating enzyme]-L-cysteine + [acceptor protein]-L-lysine = [E2 ubiquitin-conjugating enzyme]-L-cysteine + N(6)-ubiquitinyl-[acceptor protein]-L-lysine.. It functions in the pathway protein modification; protein ubiquitination. Its activity is regulated as follows. The GATOR2 complex is negatively regulated by the upstream amino acid sensors CASTOR1 and SESN2, which sequester the GATOR2 complex in absence of amino acids. In the presence of abundant amino acids, GATOR2 is released from CASTOR1 and SESN2 and activated. Catalytic component of the GATOR2 complex, a multiprotein complex that acts as an activator of the amino acid-sensing branch of the mTORC1 signaling pathway. The GATOR2 complex indirectly activates mTORC1 through the inhibition of the GATOR1 subcomplex. GATOR2 probably acts as an E3 ubiquitin-protein ligase toward GATOR1. In the presence of abundant amino acids, the GATOR2 complex mediates ubiquitination of the NPRL2 core component of the GATOR1 complex, leading to GATOR1 inactivation. In the absence of amino acids, GATOR2 is inhibited, activating the GATOR1 complex. In addition to its role in regulation of the mTORC1 complex, promotes the acidification of lysosomes and facilitates autophagic flux. Within the GATOR2 complex, WDR24 constitutes the catalytic subunit that mediates 'Lys-6'-linked ubiquitination of NPRL2. The chain is GATOR2 complex protein WDR24 from Danio rerio (Zebrafish).